A 378-amino-acid polypeptide reads, in one-letter code: Cell surface mannoprotein MP65 (378 aa).

Positions 1 to 32 (MLFKSFVTFTVLANALAAPLAHQHHQHKEEKR) are cleaved as a signal peptide. A disordered region spans residues 67–124 (VSVSVNTEPPQNHPTTTQDVASASTYPSSTDGSAASSSAAASSSSQAGSEPSGGVGSG). A compositionally biased stretch (polar residues) spans 72–93 (NTEPPQNHPTTTQDVASASTYP). Residues 94 to 116 (SSTDGSAASSSAAASSSSQAGSE) show a composition bias toward low complexity. E316 functions as the Nucleophile in the catalytic mechanism.

Belongs to the glycosyl hydrolase 17 family. As to quaternary structure, component of a multiprotein complex of 250 kDa composed of at least HYR1, MP65, and PRA1. Post-translationally, glycosylated protein with a polysaccharide moiety composed exclusively of mannose and glucose at a ratio of 12.7 to 1. Contributes highly to the carbohydrate component of the matrix. Treatment with tunicamycin impairs glycosylation.

It is found in the secreted. The protein localises to the cell wall. Surface mannoprotein required for hyphal morphogenesis, surface adherence, and pathogenicity. Contributes in a high proportion to the carbohydrate component of the matrix due to high levels of glycosylation and may play important roles during biofilm development and maintenance. Acts as a major antigen target of host cell-mediated immune response. Induces extensive T-cell proliferation of human peripheral blood mononuclear cells. Facilitates host dendritic cells maturation and promotes cytokine production through its glycosylated portion while its protein core is essentially involved in induction of T-cell response. The polypeptide is Cell surface mannoprotein MP65 (MP65) (Candida albicans (strain SC5314 / ATCC MYA-2876) (Yeast)).